Here is a 122-residue protein sequence, read N- to C-terminus: MTLGIGNDIIEIERIQANIKKYGQRFLNRVFTKNEQIYCLNRKMPALHLAGRFAAKEAVVKALGTGFSQGISWLDVEILNDANGKPYVSISPLLTQLFASPKLLISISHCHHYATAFAVWSS.

Mg(2+) is bound by residues aspartate 8 and glutamate 57.

This sequence belongs to the P-Pant transferase superfamily. AcpS family. Requires Mg(2+) as cofactor.

The protein resides in the cytoplasm. The catalysed reaction is apo-[ACP] + CoA = holo-[ACP] + adenosine 3',5'-bisphosphate + H(+). In terms of biological role, transfers the 4'-phosphopantetheine moiety from coenzyme A to a Ser of acyl-carrier-protein. The chain is Holo-[acyl-carrier-protein] synthase from Protochlamydia amoebophila (strain UWE25).